The sequence spans 460 residues: Cysteine--tRNA ligase (460 aa).

Cys-27 contributes to the Zn(2+) binding site. Residues 29-39 carry the 'HIGH' region motif; it reads PTVYDLIHVGN. Residues Cys-207, His-232, and Glu-236 each coordinate Zn(2+). A 'KMSKS' region motif is present at residues 264-268; the sequence is KMSKS. Position 267 (Lys-267) interacts with ATP.

The protein belongs to the class-I aminoacyl-tRNA synthetase family. In terms of assembly, monomer. The cofactor is Zn(2+).

It is found in the cytoplasm. The catalysed reaction is tRNA(Cys) + L-cysteine + ATP = L-cysteinyl-tRNA(Cys) + AMP + diphosphate. This chain is Cysteine--tRNA ligase, found in Thermotoga petrophila (strain ATCC BAA-488 / DSM 13995 / JCM 10881 / RKU-1).